The chain runs to 294 residues: Undecaprenyl-diphosphatase (294 aa).

6 helical membrane passes run 39–59 (PGAAFTAIIQIGTELAVILYF), 93–113 (TQMGWFIIIGTLPILIAGLLF), 123–143 (NLWITVTVLIIFGILLWVVDA), 197–217 (VSFLMAIPAVFGAGILEAVSA), 234–254 (ATIAATIVAFVVGYVVIIGFL), and 265–285 (FAIYRIALAVVVALLLICGVL).

Belongs to the UppP family.

The protein resides in the cell membrane. It carries out the reaction di-trans,octa-cis-undecaprenyl diphosphate + H2O = di-trans,octa-cis-undecaprenyl phosphate + phosphate + H(+). Catalyzes the dephosphorylation of undecaprenyl diphosphate (UPP). Confers resistance to bacitracin. This Bifidobacterium adolescentis (strain ATCC 15703 / DSM 20083 / NCTC 11814 / E194a) protein is Undecaprenyl-diphosphatase.